A 235-amino-acid chain; its full sequence is Peroxisomal membrane protein 11C (235 aa).

The Cytoplasmic portion of the chain corresponds to 1–91 (MSTLETTRAE…LPLVLLGKSK (91 aa)). The chain crosses the membrane as a helical span at residues 92-108 (NALLSTFLFLDQIVWLG). Residues 109–206 (RTGIYKDKER…LLQLAPKKVT (98 aa)) are Lumenal-facing. Residues 207-226 (PRVTGAFGFASSLISCYQLL) traverse the membrane as a helical segment. Topologically, residues 227–235 (PSHPKSKMV) are cytoplasmic.

It belongs to the peroxin-11 family. Homooligomer. Interacts with ARC5 and FIS1B on peroxisomes. In terms of tissue distribution, expressed in roots and developing siliques.

Its subcellular location is the peroxisome membrane. In terms of biological role, involved in peroxisomal proliferation. Promotes peroxisomal duplication, aggregation or elongation without fission. This chain is Peroxisomal membrane protein 11C (PEX11C), found in Arabidopsis thaliana (Mouse-ear cress).